Here is a 255-residue protein sequence, read N- to C-terminus: 14-3-3-like protein GF14 psi (255 aa).

Position 66 is a phosphoserine (Ser66). Thr162 is modified (phosphothreonine). Ser189 is modified (phosphoserine). Phosphothreonine occurs at positions 210 and 238.

This sequence belongs to the 14-3-3 family. In terms of assembly, component of a DNA binding complex that binds to the G box. Interacts with IDH3, AGT3, GLN1-1, GLN1-2, GLN1-4, SAM1, SAM2, MDH1, METK3 and MDH2. Binds to 1-aminocyclopropane-1-carboxylate synthases (ACS) such as ACS2, ACS5, ACS6, ACS8, and ACS11. Interacts with FD. Interacts with DREB1A and DREB1B in the nucleus. Interacts with CINV1.

Its subcellular location is the cytoplasm. It localises to the nucleus. Is associated with a DNA binding complex that binds to the G box, a well-characterized cis-acting DNA regulatory element found in plant genes. Involved in the regulation of nutrient metabolism. Reciprocal negative transcription regulation of miR396. Negative regulator of constitutive freezing tolerance and cold acclimation by controlling cold-induced gene expression partially through an ethylene (ET)-dependent pathway; prevents ethylene (ET) biosynthesis, probably by binding 1-aminocyclopropane-1-carboxylate synthases (ACS) to reduce their stability, thus contributing to establish adequate ET levels under both standard and low-temperature conditions. This is 14-3-3-like protein GF14 psi from Arabidopsis thaliana (Mouse-ear cress).